Reading from the N-terminus, the 689-residue chain is Glycine--tRNA ligase beta subunit (689 aa).

The protein belongs to the class-II aminoacyl-tRNA synthetase family. In terms of assembly, tetramer of two alpha and two beta subunits.

Its subcellular location is the cytoplasm. The catalysed reaction is tRNA(Gly) + glycine + ATP = glycyl-tRNA(Gly) + AMP + diphosphate. The protein is Glycine--tRNA ligase beta subunit of Glaesserella parasuis serovar 5 (strain SH0165) (Haemophilus parasuis).